The sequence spans 678 residues: NADPH--cytochrome P450 reductase (678 aa).

G2 carries the N-acetylglycine modification. Residues 2–22 lie on the Lumenal side of the membrane; sequence GDSNVDTGTTTSEMVAEEVSL. Residues 23 to 43 form a helical membrane-spanning segment; that stretch reads FSATDMVLFSLIVGLLTYWFI. At 44-678 the chain is on the cytoplasmic side; sequence FRKKKDEVPE…KGRYSLDVWS (635 aa). At S63 the chain carries Phosphoserine. In terms of domain architecture, Flavodoxin-like spans 80–224; the sequence is IIVFYGSQTG…DFITWREQFW (145 aa). FMN-binding positions include 86–91, 138–141, 173–182, and D208; these read SQTGTA, ATYG, and LGNKTYEHFN. In terms of domain architecture, FAD-binding FR-type spans 279–521; the sequence is KNPFLAVVTT…FVRKSQFRLP (243 aa). R298 contacts NADP(+). Residues R424, 454 to 457, 472 to 474, Y478, and 488 to 491 each bind FAD; these read RYYS, CAV, and GVAT. NADP(+) contacts are provided by residues T535, 596-597, 602-606, and D639; these read SR and KVYVQ. FAD is bound at residue W677.

Belongs to the NADPH--cytochrome P450 reductase family. It in the N-terminal section; belongs to the flavodoxin family. The protein in the C-terminal section; belongs to the flavoprotein pyridine nucleotide cytochrome reductase family. FAD is required as a cofactor. FMN serves as cofactor.

It localises to the endoplasmic reticulum membrane. It catalyses the reaction 2 oxidized [cytochrome P450] + NADPH = 2 reduced [cytochrome P450] + NADP(+) + H(+). In terms of biological role, this enzyme is required for electron transfer from NADP to cytochrome P450 in microsomes. It can also provide electron transfer to heme oxygenase and cytochrome B5. The chain is NADPH--cytochrome P450 reductase from Sus scrofa (Pig).